Reading from the N-terminus, the 306-residue chain is F-box/LRR-repeat protein At3g26922 (306 aa).

Residues 13–73 form the F-box domain; the sequence is EDRISDLPEA…QSEDETYSEI (61 aa). 6 LRR repeats span residues 67 to 93, 98 to 122, 138 to 170, 171 to 196, 215 to 243, and 263 to 288; these read DETYSEIVCRLLLSNKAPFLESLHLGF, CRSVEVGMWIGIAYARHVRDLVLHV, CETLESLTLRSWVLVDVPSPACLKSLRTLRLEN, VDYKYDDSVYNLLSGCPNLENLVVYR, LTIYDDNDGEYCTGYVINAPSLKYLKIDG, and IMNVSKIINEKLLETLTSVKRLSLAL.

In Arabidopsis thaliana (Mouse-ear cress), this protein is F-box/LRR-repeat protein At3g26922.